Reading from the N-terminus, the 350-residue chain is Ion-translocating oxidoreductase complex subunit D (350 aa).

5 helical membrane passes run 20–40, 42–62, 68–88, 89–109, and 123–143; these read IMMLVLIAALPGIATQLWFFG, GTLFQIILAAVSALAAEAAVL, PIAAILKDNSALLTGLLLAVS, IPPLAPWWMVVLGTVFAVIIA, and PAMIGYVVLLISFPVQMTSWL. Residue T187 is modified to FMN phosphoryl threonine. Transmembrane regions (helical) follow at residues 215–235, 244–264, 267–287, 301–321, and 322–342; these read LAGAGWQWVNIAWLIGGVWLL, IPVSFLVTLAVCSTLGWAFAG, LASPQLHLLSGATMLGAFFIL, LIFGALAGLLVWLIRSFGGYP, and DGVAFAVLLANITVPLIDYYT.

This sequence belongs to the NqrB/RnfD family. In terms of assembly, the complex is composed of six subunits: RnfA, RnfB, RnfC, RnfD, RnfE and RnfG. FMN is required as a cofactor.

The protein localises to the cell inner membrane. In terms of biological role, part of a membrane-bound complex that couples electron transfer with translocation of ions across the membrane. This chain is Ion-translocating oxidoreductase complex subunit D, found in Citrobacter koseri (strain ATCC BAA-895 / CDC 4225-83 / SGSC4696).